The primary structure comprises 323 residues: Beta-ketoacyl-[acyl-carrier-protein] synthase III (323 aa).

Catalysis depends on residues Cys113 and His250. Positions 251-255 are ACP-binding; the sequence is QANLR. Residue Asn280 is part of the active site.

This sequence belongs to the thiolase-like superfamily. FabH family. In terms of assembly, homodimer.

It is found in the cytoplasm. It carries out the reaction malonyl-[ACP] + acetyl-CoA + H(+) = 3-oxobutanoyl-[ACP] + CO2 + CoA. Its pathway is lipid metabolism; fatty acid biosynthesis. Catalyzes the condensation reaction of fatty acid synthesis by the addition to an acyl acceptor of two carbons from malonyl-ACP. Catalyzes the first condensation reaction which initiates fatty acid synthesis and may therefore play a role in governing the total rate of fatty acid production. Possesses both acetoacetyl-ACP synthase and acetyl transacylase activities. Its substrate specificity determines the biosynthesis of branched-chain and/or straight-chain of fatty acids. This is Beta-ketoacyl-[acyl-carrier-protein] synthase III from Paracoccus denitrificans (strain Pd 1222).